The following is a 624-amino-acid chain: Membrane protein insertase YidC (624 aa).

A helical transmembrane segment spans residues 8–28 (MIIAIALSLAVLLGWNYFVTA). Residues 36–95 (QQQAAQVNPSQGVNPSQGVDPSQGVNASPSPKEGGPSAPVPGTLPGAAGGSPQAALARDE) form a disordered region. The segment covering 43–64 (NPSQGVNPSQGVDPSQGVNASP) has biased composition (polar residues). Transmembrane regions (helical) follow at residues 370-390 (FDLL…FKAL), 396-416 (LFGN…LFFL), 470-490 (WPVL…FVTI), 526-542 (LLHL…TMFL), and 559-579 (FTFM…GLVI).

Belongs to the OXA1/ALB3/YidC family. Type 1 subfamily. As to quaternary structure, interacts with the Sec translocase complex via SecD. Specifically interacts with transmembrane segments of nascent integral membrane proteins during membrane integration.

It is found in the cell inner membrane. Required for the insertion and/or proper folding and/or complex formation of integral membrane proteins into the membrane. Involved in integration of membrane proteins that insert both dependently and independently of the Sec translocase complex, as well as at least some lipoproteins. Aids folding of multispanning membrane proteins. The chain is Membrane protein insertase YidC from Methylobacterium sp. (strain 4-46).